Consider the following 247-residue polypeptide: Pleckstrin homology domain-containing family F member 2 (247 aa).

In terms of domain architecture, PH spans 35–131 (VLIGEGVLTK…WMSHINKCVS (97 aa)). Residues 152 to 212 (DSEATVCMRC…VCEFCYKQLS (61 aa)) form an FYVE-type zinc finger. 8 residues coordinate Zn(2+): Cys158, Cys161, Cys175, Cys178, Cys183, Cys186, Cys204, and Cys207. The segment at 213–247 (TGATLPPRSDSYSRQGSDFGSNNISDDDDDDDSSD) is disordered. A compositionally biased stretch (polar residues) spans 222–236 (DSYSRQGSDFGSNNI). Residues 237–247 (SDDDDDDDSSD) show a composition bias toward acidic residues.

The protein resides in the early endosome membrane. Its subcellular location is the endoplasmic reticulum. In terms of biological role, may play a role in early endosome fusion upstream of RAB5, hence regulating receptor trafficking and fluid-phase transport. Enhances cellular sensitivity to TNF-induced apoptosis. This Danio rerio (Zebrafish) protein is Pleckstrin homology domain-containing family F member 2 (plekhf2).